Consider the following 286-residue polypeptide: Expansin-B4 (286 aa).

Positions 1-24 are cleaved as a signal peptide; sequence MGSLSSLAAAAVFLSLLAVGHCAA. 2 N-linked (GlcNAc...) asparagine glycosylation sites follow: Asn28 and Asn44. In terms of domain architecture, Expansin-like EG45 spans 75–181; that stretch reads GGACGFKHTN…TRVPCEFPGL (107 aa). Intrachain disulfides connect Cys78–Cys106, Cys109–Cys176, and Cys114–Cys120. The region spanning 194-281 is the Expansin-like CBD domain; that stretch reads VYFAVLVEYE…NWRPNTFYRS (88 aa). Asn257 is a glycosylation site (N-linked (GlcNAc...) asparagine).

This sequence belongs to the expansin family. Expansin B subfamily. In terms of tissue distribution, expressed in internodes.

It localises to the secreted. The protein localises to the cell wall. The protein resides in the membrane. Functionally, may cause loosening and extension of plant cell walls by disrupting non-covalent bonding between cellulose microfibrils and matrix glucans. No enzymatic activity has been found. May be required for rapid internodal elongation in deepwater rice during submergence. The polypeptide is Expansin-B4 (EXPB4) (Oryza sativa subsp. japonica (Rice)).